We begin with the raw amino-acid sequence, 567 residues long: SRSF protein kinase 3 (567 aa).

Gly residues predominate over residues 1-16; sequence MSASTGGGGDSGGSGG. The segment at 1–36 is disordered; sequence MSASTGGGGDSGGSGGSSSSSQASCGPESSGSELAL. Over residues 17-32 the composition is skewed to low complexity; it reads SSSSSQASCGPESSGS. Position 50 is a phosphoserine (serine 50). Residues 79–565 enclose the Protein kinase domain; sequence YHVVRKLGWG…AADCLQHPWL (487 aa). ATP-binding positions include 85–93 and lysine 108; that span reads LGWGHFSTV. Aspartate 212 (proton acceptor) is an active-site residue. Disordered stretches follow at residues 238 to 283 and 298 to 351; these read QQAG…RLLE and ATQA…SQTS. Over residues 248–258 the composition is skewed to polar residues; the sequence is SIVSTAPQEVL. The span at 264 to 279 shows a compositional bias: basic residues; the sequence is SKNKRKKMRRKRKQQK. Low complexity predominate over residues 327-348; that stretch reads AGPSPASSSPAPGGGRSLSAGS. A Phosphoserine modification is found at serine 330.

This sequence belongs to the protein kinase superfamily. CMGC Ser/Thr protein kinase family. As to expression, expressed in skeletal and heart muscle. Also expressed in the fetal brain.

The protein localises to the nucleus. The protein resides in the cytoplasm. The enzyme catalyses L-seryl-[protein] + ATP = O-phospho-L-seryl-[protein] + ADP + H(+). It catalyses the reaction L-threonyl-[protein] + ATP = O-phospho-L-threonyl-[protein] + ADP + H(+). Its function is as follows. Serine/arginine-rich protein-specific kinase which specifically phosphorylates its substrates at serine residues located in regions rich in arginine/serine dipeptides, known as RS domains. Phosphorylates the SR splicing factor SRSF1 and the lamin-B receptor (LBR) in vitro. Required for normal muscle development. In Homo sapiens (Human), this protein is SRSF protein kinase 3 (SRPK3).